Here is a 194-residue protein sequence, read N- to C-terminus: Cysteine and glycine-rich protein 3 (194 aa).

The interaction with TCAP stretch occupies residues 1–5 (MPNWG). Residues 10-61 (CGACEKTVYHAEEIQCNGRSFHKTCFHCMACRKALDSTTVAAHESEIYCKVC) enclose the LIM zinc-binding 1 domain. The Nuclear localization signal signature appears at 64 to 69 (RRYGPK). An interaction with CLF2 region spans residues 94-106 (QSPKQARSATTSS). 2 positions are modified to phosphoserine: Ser-95 and Ser-153. An LIM zinc-binding 2 domain is found at 120–171 (CPRCGKSVYAAEKVMGGGKPWHKTCFRCAICGKSLESTNVTDKDGELYCKVC).

Self-associates. Oligomeric in the cytoplasm and monomeric in the nucleus. Homooligomers preferentially form along the actin cytoskeleton. Interacts with TCAP, LDHD, MYOD1, MYOG, ACTN2, NRAP, MYF6. Interacts (via N-terminus) with GLRX3 (via C-terminus) and PPP3CA; GLRX3 and calcineurin compete for interaction with CSRP3. Interacts with CFL2; the stoichiometry influences F-actin depolymerization and possibly two molecules of CFL2 can interact with one molecule of CSRP3 resulting in the highest functional impact; the interaction is stronger with phosphorylated CFL2.

The protein resides in the nucleus. The protein localises to the cytoplasm. Its subcellular location is the cytoskeleton. It is found in the myofibril. It localises to the sarcomere. The protein resides in the z line. Functionally, positive regulator of myogenesis. Acts as a cofactor for myogenic bHLH transcription factors such as MYOD1, and probably MYOG and MYF6. Enhances the DNA-binding activity of the MYOD1:TCF3 isoform E47 complex and may promote formation of a functional MYOD1:TCF3 isoform E47:MEF2A complex involved in myogenesis. Plays a crucial and specific role in the organization of cytosolic structures in cardiomyocytes. Could play a role in mechanical stretch sensing. May be a scaffold protein that promotes the assembly of interacting proteins at Z-line structures. It is essential for calcineurin anchorage to the Z line. Required for stress-induced calcineurin-NFAT activation. The role in regulation of cytoskeleton dynamics by association with CFL2 is reported conflictingly. Proposed to contribute to the maintenance of muscle cell integrity through an actin-based mechanism. Can directly bind to actin filaments, cross-link actin filaments into bundles without polarity selectivity and protect them from dilution- and cofilin-mediated depolymerization; the function seems to involve its self-association. In vitro can inhibit PKC/PRKCA activity. Proposed to be involved in cardiac stress signaling by down-regulating excessive PKC/PRKCA signaling. The protein is Cysteine and glycine-rich protein 3 (CSRP3) of Bos taurus (Bovine).